A 538-amino-acid polypeptide reads, in one-letter code: Chaperonin GroEL (538 aa).

ATP contacts are provided by residues 29–32 (TIGP), 86–90 (DGTTT), Gly413, 476–478 (NAA), and Asp492.

The protein belongs to the chaperonin (HSP60) family. Forms a cylinder of 14 subunits composed of two heptameric rings stacked back-to-back. Interacts with the co-chaperonin GroES.

The protein resides in the cytoplasm. The enzyme catalyses ATP + H2O + a folded polypeptide = ADP + phosphate + an unfolded polypeptide.. Together with its co-chaperonin GroES, plays an essential role in assisting protein folding. The GroEL-GroES system forms a nano-cage that allows encapsulation of the non-native substrate proteins and provides a physical environment optimized to promote and accelerate protein folding. The polypeptide is Chaperonin GroEL (Staphylococcus aureus (strain USA300)).